The primary structure comprises 574 residues: Septation ring formation regulator EzrA (574 aa).

Over 1–7 (MSSGIIL) the chain is Extracellular. A helical transmembrane segment spans residues 8 to 26 (LIVAIVLLVIIAYLVGVII). The Cytoplasmic portion of the chain corresponds to 27–574 (RKRNDSLITS…YEKTREHIRF (548 aa)). Coiled coils occupy residues 102 to 141 (NFIR…EEKN), 274 to 350 (ELVT…ETES), and 459 to 520 (QLEA…SFEA).

Belongs to the EzrA family.

The protein localises to the cell membrane. Functionally, negative regulator of FtsZ ring formation; modulates the frequency and position of FtsZ ring formation. Inhibits FtsZ ring formation at polar sites. Interacts either with FtsZ or with one of its binding partners to promote depolymerization. The chain is Septation ring formation regulator EzrA from Streptococcus pyogenes serotype M1.